Here is a 160-residue protein sequence, read N- to C-terminus: MMERFEKIEMKIPAKAEYVAIIRLTMAGVANRMGFAYDDIEDMKIAISEACTNIVQHAYKEDVGEIAIVFGLYENRLEIMVADNGVSFDFNNLRSKVGPYDISKPVEHLPENGLGLYLINTLMDDIQIMHDEGMTVLMTKYIQREQVENDGNPISTYESY.

The protein belongs to the anti-sigma-factor family.

The catalysed reaction is L-seryl-[protein] + ATP = O-phospho-L-seryl-[protein] + ADP + H(+). It carries out the reaction L-threonyl-[protein] + ATP = O-phospho-L-threonyl-[protein] + ADP + H(+). Negative regulator of sigma-B activity. Phosphorylates and inactivates its specific antagonist protein, RsbV. Upon phosphorylation of RsbV, RsbW is released and binds to sigma-B, thereby blocking its ability to form an RNA polymerase holoenzyme (E-sigma-B). This chain is Serine-protein kinase RsbW, found in Bacillus anthracis (strain A0248).